The sequence spans 892 residues: Alanine--tRNA ligase (892 aa).

Zn(2+)-binding residues include His596, His600, Cys700, and His704.

This sequence belongs to the class-II aminoacyl-tRNA synthetase family. Zn(2+) is required as a cofactor.

It localises to the cytoplasm. The enzyme catalyses tRNA(Ala) + L-alanine + ATP = L-alanyl-tRNA(Ala) + AMP + diphosphate. Its function is as follows. Catalyzes the attachment of alanine to tRNA(Ala) in a two-step reaction: alanine is first activated by ATP to form Ala-AMP and then transferred to the acceptor end of tRNA(Ala). Also edits incorrectly charged Ser-tRNA(Ala) and Gly-tRNA(Ala) via its editing domain. This is Alanine--tRNA ligase from Methanococcus maripaludis (strain DSM 14266 / JCM 13030 / NBRC 101832 / S2 / LL).